The sequence spans 461 residues: Cysteine--tRNA ligase (461 aa).

Cys28 is a binding site for Zn(2+). The 'HIGH' region signature appears at 30 to 40 (ITVYDLCHIGH). 3 residues coordinate Zn(2+): Cys209, His234, and Glu238. A 'KMSKS' region motif is present at residues 266 to 270 (KMSKS). Position 269 (Lys269) interacts with ATP.

It belongs to the class-I aminoacyl-tRNA synthetase family. Monomer. Requires Zn(2+) as cofactor.

Its subcellular location is the cytoplasm. It carries out the reaction tRNA(Cys) + L-cysteine + ATP = L-cysteinyl-tRNA(Cys) + AMP + diphosphate. In Escherichia coli (strain 55989 / EAEC), this protein is Cysteine--tRNA ligase.